The following is a 132-amino-acid chain: Small ribosomal subunit protein uS9 (132 aa).

The protein belongs to the universal ribosomal protein uS9 family.

The sequence is that of Small ribosomal subunit protein uS9 from Mesomycoplasma hyopneumoniae (strain 232) (Mycoplasma hyopneumoniae).